Reading from the N-terminus, the 541-residue chain is Apolipoprotein N-acyltransferase (541 aa).

6 consecutive transmembrane segments (helical) span residues 21–41 (MSWF…WYSL), 54–74 (LTSL…SWML), 89–109 (VLIS…FFIV), 116–136 (ILWC…YFLC), 157–177 (FGGF…GISF), and 189–209 (YVWL…YEYL). The 282-residue stretch at 219 to 500 (LRVAVIQPAS…PGVLQVSLPM (282 aa)) folds into the CN hydrolase domain. Glutamate 265 serves as the catalytic Proton acceptor. Lysine 350 is an active-site residue. Catalysis depends on cysteine 405, which acts as the Nucleophile. The chain crosses the membrane as a helical span at residues 506-526 (LYAFWGDFPMIFLSLLSIGCI).

It belongs to the CN hydrolase family. Apolipoprotein N-acyltransferase subfamily.

Its subcellular location is the cell inner membrane. The catalysed reaction is N-terminal S-1,2-diacyl-sn-glyceryl-L-cysteinyl-[lipoprotein] + a glycerophospholipid = N-acyl-S-1,2-diacyl-sn-glyceryl-L-cysteinyl-[lipoprotein] + a 2-acyl-sn-glycero-3-phospholipid + H(+). It functions in the pathway protein modification; lipoprotein biosynthesis (N-acyl transfer). Functionally, catalyzes the phospholipid dependent N-acylation of the N-terminal cysteine of apolipoprotein, the last step in lipoprotein maturation. The protein is Apolipoprotein N-acyltransferase of Chlamydia caviae (strain ATCC VR-813 / DSM 19441 / 03DC25 / GPIC) (Chlamydophila caviae).